A 133-amino-acid chain; its full sequence is Small ribosomal subunit protein uS8 (133 aa).

It belongs to the universal ribosomal protein uS8 family. Part of the 30S ribosomal subunit. Contacts proteins S5 and S12.

Its function is as follows. One of the primary rRNA binding proteins, it binds directly to 16S rRNA central domain where it helps coordinate assembly of the platform of the 30S subunit. The chain is Small ribosomal subunit protein uS8 from Synechococcus sp. (strain CC9605).